Reading from the N-terminus, the 638-residue chain is Ubiquilin-2 (638 aa).

Over residues Met1 to Pro26 the composition is skewed to low complexity. 2 disordered regions span residues Met1–Lys31 and Arg107–Gly158. An N-acetylalanine modification is found at Ala2. Ser25 bears the Phosphoserine mark. The region spanning Ile33–Arg107 is the Ubiquitin-like domain. A compositionally biased stretch (low complexity) spans Ala112–Gly158. 2 STI1 domains span residues Ser189–Met217 and Asn219–Met258. The disordered stretch occupies residues Phe298–Ala364. A compositionally biased stretch (low complexity) spans Thr305–Thr316. Residues Leu327–Thr336 show a composition bias toward pro residues. The segment covering Thr337–Ala364 has biased composition (low complexity). STI1 domains follow at residues Asn393–Met440 and Leu444–Leu476. 11 consecutive repeat copies span residues Pro505–Gly507, Pro508–Thr510, Pro511–Gly513, Pro514–Gly516, Pro517–Val519, Pro520–Thr522, Pro523–Gly525, Pro526–Gly528, Pro529–Gly531, Pro532–Thr533, and Pro535–Ser537. Positions Pro505–Ser537 are 11 X 3 AA tandem repeats P-X-X. The interval Gly528–Asn570 is disordered. The segment covering Thr533–Thr551 has biased composition (low complexity). Polar residues predominate over residues Val552 to Asn570. In terms of domain architecture, UBA spans Pro589–Ser635.

Homodimer. Forms heterodimer with UBQLN1. Binds UBE3A and BTRC. Interacts with the 19S proteasome subunit. Interacts with C9orf72. Binds CD47. Interacts with HNRNPA1 and HNRNPU. Found in a complex with UBQLN1 and MAP1LC3A/B/C. Interacts with EPS15, EPN1 and EPN2. Interacts with HERPUD1. Interacts with RAD23A. Interacts with TARDBP. Interacts (via C-terminus) with FAF2 (via N-terminus). Interacts with UBQLN4. In terms of processing, degraded during macroautophagy. As to expression, highly expressed in smooth muscle. Expression in other tissues is very low.

Its subcellular location is the cytoplasm. It localises to the nucleus. It is found in the membrane. The protein localises to the cytoplasmic vesicle. The protein resides in the autophagosome. In terms of biological role, plays an important role in the regulation of different protein degradation mechanisms and pathways including ubiquitin-proteasome system (UPS), autophagy and the endoplasmic reticulum-associated protein degradation (ERAD) pathway. Mediates the proteasomal targeting of misfolded or accumulated proteins for degradation by binding (via UBA domain) to their polyubiquitin chains and by interacting (via ubiquitin-like domain) with the subunits of the proteasome. Plays a role in the ERAD pathway via its interaction with ER-localized proteins FAF2/UBXD8 and HERPUD1 and may form a link between the polyubiquitinated ERAD substrates and the proteasome. Involved in the regulation of macroautophagy and autophagosome formation; required for maturation of autophagy-related protein LC3 from the cytosolic form LC3-I to the membrane-bound form LC3-II and may assist in the maturation of autophagosomes to autolysosomes by mediating autophagosome-lysosome fusion. Negatively regulates the endocytosis of GPCR receptors: AVPR2 and ADRB2, by specifically reducing the rate at which receptor-arrestin complexes concentrate in clathrin-coated pits (CCPs). Links CD47 to vimentin-containing intermediate filaments of the cytoskeleton. The sequence is that of Ubiquilin-2 (Ubqln2) from Mus musculus (Mouse).